We begin with the raw amino-acid sequence, 159 residues long: Cyclic pyranopterin monophosphate synthase (159 aa).

Residues 75–77 and 113–114 contribute to the substrate site; these read LCH and ME. Residue D128 is part of the active site.

This sequence belongs to the MoaC family. In terms of assembly, homohexamer; trimer of dimers.

The enzyme catalyses (8S)-3',8-cyclo-7,8-dihydroguanosine 5'-triphosphate = cyclic pyranopterin phosphate + diphosphate. It participates in cofactor biosynthesis; molybdopterin biosynthesis. In terms of biological role, catalyzes the conversion of (8S)-3',8-cyclo-7,8-dihydroguanosine 5'-triphosphate to cyclic pyranopterin monophosphate (cPMP). In Serratia proteamaculans (strain 568), this protein is Cyclic pyranopterin monophosphate synthase.